The chain runs to 146 residues: Hemoglobin subunit beta-1 (146 aa).

The 145-residue stretch at 2–146 (HWTAEEKHLL…VAHALARRYH (145 aa)) folds into the Globin domain. Residues histidine 63 and histidine 92 each coordinate heme b.

It belongs to the globin family. As to quaternary structure, there are three forms of hemoglobin in Sphenodon: A, A' and D. Hb A is a tetramer of two alpha-A and two beta-1, Hb A' is a tetramer of two alpha-a and two beta-2, Hb D is a tetramer of two alpha-D and two beta-2.

Its function is as follows. Involved in oxygen transport from the lung to the various peripheral tissues. The chain is Hemoglobin subunit beta-1 (HBB1) from Sphenodon punctatus (Tuatara).